The sequence spans 119 residues: Large ribosomal subunit protein uL18 (119 aa).

Belongs to the universal ribosomal protein uL18 family. Part of the 50S ribosomal subunit; part of the 5S rRNA/L5/L18/L25 subcomplex. Contacts the 5S and 23S rRNAs.

This is one of the proteins that bind and probably mediate the attachment of the 5S RNA into the large ribosomal subunit, where it forms part of the central protuberance. The sequence is that of Large ribosomal subunit protein uL18 from Micrococcus luteus (Micrococcus lysodeikticus).